A 100-amino-acid polypeptide reads, in one-letter code: Mitochondrial import inner membrane translocase subunit Tim10 B (100 aa).

The Twin CX3C motif signature appears at 25 to 49; sequence CFQRCVPSLHHRALDAEEEACLHSC. 2 disulfide bridges follow: Cys-25-Cys-49 and Cys-29-Cys-45.

Belongs to the small Tim family. In terms of assembly, component of the TIM22 complex, which core is composed of TIMM22, associated with TIMM10 (TIMM10A and/or TIMM10B), TIMM9, AGK and TIMM29.

The protein localises to the mitochondrion inner membrane. Functionally, component of the TIM22 complex, a complex that mediates the import and insertion of multi-pass transmembrane proteins into the mitochondrial inner membrane. The TIM22 complex forms a twin-pore translocase that uses the membrane potential as the external driving force. In the TIM22 complex, it may act as a docking point for the soluble 70 kDa complex that guides the target proteins in transit through the aqueous mitochondrial intermembrane space. The polypeptide is Mitochondrial import inner membrane translocase subunit Tim10 B (Timm10b) (Mus musculus (Mouse)).